Here is a 290-residue protein sequence, read N- to C-terminus: Porphobilinogen deaminase (290 aa).

C237 carries the post-translational modification S-(dipyrrolylmethanemethyl)cysteine.

The protein belongs to the HMBS family. In terms of assembly, monomer. Requires dipyrromethane as cofactor.

It carries out the reaction 4 porphobilinogen + H2O = hydroxymethylbilane + 4 NH4(+). The protein operates within porphyrin-containing compound metabolism; protoporphyrin-IX biosynthesis; coproporphyrinogen-III from 5-aminolevulinate: step 2/4. In terms of biological role, tetrapolymerization of the monopyrrole PBG into the hydroxymethylbilane pre-uroporphyrinogen in several discrete steps. This chain is Porphobilinogen deaminase, found in Clostridium botulinum (strain Kyoto / Type A2).